We begin with the raw amino-acid sequence, 343 residues long: S-adenosylmethionine:tRNA ribosyltransferase-isomerase (343 aa).

Belongs to the QueA family. As to quaternary structure, monomer.

It localises to the cytoplasm. It catalyses the reaction 7-aminomethyl-7-carbaguanosine(34) in tRNA + S-adenosyl-L-methionine = epoxyqueuosine(34) in tRNA + adenine + L-methionine + 2 H(+). Its pathway is tRNA modification; tRNA-queuosine biosynthesis. In terms of biological role, transfers and isomerizes the ribose moiety from AdoMet to the 7-aminomethyl group of 7-deazaguanine (preQ1-tRNA) to give epoxyqueuosine (oQ-tRNA). In Borreliella burgdorferi (strain ATCC 35210 / DSM 4680 / CIP 102532 / B31) (Borrelia burgdorferi), this protein is S-adenosylmethionine:tRNA ribosyltransferase-isomerase.